A 243-amino-acid chain; its full sequence is 7-carboxy-7-deazaguanine synthase (243 aa).

Substrate is bound by residues 9-11 (IMG) and R24. The Radical SAM core domain maps to 15–243 (YIGRRFIFVR…IQMHKYLGML (229 aa)). 3 residues coordinate [4Fe-4S] cluster: C28, C32, and C35. T84 serves as a coordination point for substrate. G86 provides a ligand contact to S-adenosyl-L-methionine.

It belongs to the radical SAM superfamily. 7-carboxy-7-deazaguanine synthase family. In terms of assembly, homodimer. [4Fe-4S] cluster is required as a cofactor. Requires S-adenosyl-L-methionine as cofactor. Mg(2+) serves as cofactor.

The enzyme catalyses 6-carboxy-5,6,7,8-tetrahydropterin + H(+) = 7-carboxy-7-deazaguanine + NH4(+). The protein operates within purine metabolism; 7-cyano-7-deazaguanine biosynthesis. Catalyzes the complex heterocyclic radical-mediated conversion of 6-carboxy-5,6,7,8-tetrahydropterin (CPH4) to 7-carboxy-7-deazaguanine (CDG), a step common to the biosynthetic pathways of all 7-deazapurine-containing compounds. In Methanocaldococcus jannaschii (strain ATCC 43067 / DSM 2661 / JAL-1 / JCM 10045 / NBRC 100440) (Methanococcus jannaschii), this protein is 7-carboxy-7-deazaguanine synthase.